The primary structure comprises 905 residues: Respiratory burst oxidase homolog protein B (905 aa).

Disordered regions lie at residues 1-46 (MADL…KTAR) and 69-134 (EVRG…VRKR). At 1–355 (MADLEAGMVA…MYFLEENWKR (355 aa)) the chain is on the cytoplasmic side. Positions 29-44 (IPNSGNLGSSNRSTKT) are enriched in polar residues. Positions 75-84 (EGGSGHGTGF) are enriched in gly residues. Residues 91–108 (SPSSKSGKLTSKLRQVTN) show a composition bias toward polar residues. EF-hand-like stretches follow at residues 172–180 (QVDGVLLRS) and 206–217 (RGIVKQVLTKDE). 2 EF-hand domains span residues 229–264 (GFDN…SASA) and 273–308 (RADE…SPSE). Ca(2+) is bound by residues Asp242, Asn244, Asp246, Arg248, and Glu253. A helical membrane pass occupies residues 356 to 376 (SWVMTLWISICIALFIWKFIQ). At 377-440 (YRNRAVFGIM…FNDNINFHKV (64 aa)) the chain is on the extracellular side. The 157-residue stretch at 395–551 (GAAETLKFNM…HLFVIVYTLL (157 aa)) folds into the Ferric oxidoreductase domain. The chain crosses the membrane as a helical span at residues 441–461 (IAAGVAVGVALHAGAHLTCDF). Over 462–496 (PRLLHASDAQYELMKPFFGEKRPPNYWWFVKGTEG) the chain is Cytoplasmic. The chain crosses the membrane as a helical span at residues 497-517 (WTGVVMVVLMAIAFTLAQPWF). Topologically, residues 518–539 (RRNKLKDSNPLKKMTGFNAFWF) are extracellular. Residues 540 to 560 (THHLFVIVYTLLFVHGTCLYL) form a helical membrane-spanning segment. At 561–568 (SRKWYKKT) the chain is on the cytoplasmic side. The chain crosses the membrane as a helical span at residues 569 to 586 (TWMYLAVPVVLYVSERIL). The 129-residue stretch at 587-715 (RLFRSHDAVG…DGPYGAPAQD (129 aa)) folds into the FAD-binding FR-type domain. Topologically, residues 587–717 (RLFRSHDAVG…PYGAPAQDYR (131 aa)) are extracellular. A helical membrane pass occupies residues 718 to 738 (EYDVLLLIGLGIGATPLISIV). Topologically, residues 739-905 (KDVLNHIQGE…TRFDFHKENF (167 aa)) are cytoplasmic.

It belongs to the RBOH (TC 5.B.1.3) family. As to quaternary structure, monomer and homodimer, stabilized by swapping the EF-hand motifs. Interacts with GTP-bound RAC1.

The protein localises to the membrane. Calcium-dependent NADPH oxidase that generates superoxide. The sequence is that of Respiratory burst oxidase homolog protein B (RBOHB) from Oryza sativa subsp. japonica (Rice).